The primary structure comprises 741 residues: MKFQEGVFLVVIFFLAYTQLVKGQHQPREDCKLKCGNVTIEYPFGISTGCYYPGDDNFNLTCVVEEKLLLFGIIQVTNISHSGHVSVLFERFSECYEQKNETNGTALGYQLGSSFSLSSNNKFTLVGCNALSLLSTFGKQNYSTGCLSLCNSQPEANGRCNGVGCCTTEDFSVPFDSDTFQFGSVRLRNQVNNSLDLFNTSVYQFNPCTYAFLVEDGKFNFDSSKDLKNLRNVTRFPVALDWSIGNQTCEQAGSTRICGKNSSCYNSTTRNGYICKCNEGYDGNPYRSEGCKDIDECISDTHNCSDPKTCRNRDGGFDCKCPSGYDLNSSMSCTRPEYKRTRIFLVIIIGVLVLLLAAICIQHATKQRKYTKLRRQFFEQNGGGMLIQRLSGAGLSNIDFKIFTEEGMKEATNGYDESRILGQGGQGTVYKGILPDNTIVAIKKARLADSRQVDQFIHEVLVLSQINHRNVVKILGCCLETEVPLLVYEFITNGTLFDHLHGSIFDSSLTWEHRLRIAIEVAGTLAYLHSSASIPIIHRDIKTANILLDENLTAKVADFGASKLIPMDKEQLTTMVQGTLGYLDPEYYTTGLLNEKSDVYSFGVVLMELLSGQKALCFERPQASKHLVSYFVSATEENRLHEIIDDQVLNEDNLKEIQEAARIAAECTRLMGEERPRMKEVAAKLEALRVEKTKHKWSDQYPEENEHLIGGHILSAQGETSSSIGYDSIKNVAILDIETGR.

The first 23 residues, 1 to 23 (MKFQEGVFLVVIFFLAYTQLVKG), serve as a signal peptide directing secretion. Residues 24–342 (QHQPREDCKL…CTRPEYKRTR (319 aa)) lie on the Extracellular side of the membrane. 12 N-linked (GlcNAc...) asparagine glycosylation sites follow: asparagine 37, asparagine 59, asparagine 78, asparagine 100, asparagine 103, asparagine 141, asparagine 192, asparagine 199, asparagine 232, asparagine 246, asparagine 261, and asparagine 266. An EGF-like 1 domain is found at 245–292 (GNQTCEQAGSTRICGKNSSCYNSTTRNGYICKCNEGYDGNPYRSEGCK). 6 disulfide bridges follow: cysteine 249-cysteine 264, cysteine 258-cysteine 275, cysteine 277-cysteine 291, cysteine 297-cysteine 310, cysteine 304-cysteine 319, and cysteine 321-cysteine 333. The 42-residue stretch at 293–334 (DIDECISDTHNCSDPKTCRNRDGGFDCKCPSGYDLNSSMSCT) folds into the EGF-like 2; calcium-binding domain. Asparagine 303 is a glycosylation site (N-linked (GlcNAc...) asparagine). Residue asparagine 328 is glycosylated (N-linked (GlcNAc...) asparagine). A helical membrane pass occupies residues 343 to 363 (IFLVIIIGVLVLLLAAICIQH). Over 364 to 741 (ATKQRKYTKL…VAILDIETGR (378 aa)) the chain is Cytoplasmic. Threonine 404 is subject to Phosphothreonine. One can recognise a Protein kinase domain in the interval 415 to 698 (YDESRILGQG…RVEKTKHKWS (284 aa)). ATP-binding positions include 421–429 (LGQGGQGTV) and lysine 443. A Phosphotyrosine modification is found at tyrosine 488. Aspartate 540 functions as the Proton acceptor in the catalytic mechanism. Phosphothreonine is present on residues threonine 574 and threonine 579. Residue tyrosine 587 is modified to Phosphotyrosine.

The protein belongs to the protein kinase superfamily. Ser/Thr protein kinase family. In terms of tissue distribution, predominantly expressed in green tissues such as stems and leaves.

The protein localises to the membrane. It catalyses the reaction L-seryl-[protein] + ATP = O-phospho-L-seryl-[protein] + ADP + H(+). It carries out the reaction L-threonyl-[protein] + ATP = O-phospho-L-threonyl-[protein] + ADP + H(+). Functionally, serine/threonine-protein kinase that may function as a signaling receptor of extracellular matrix component. Binding to pectin may have significance in the control of cell expansion, morphogenesis and development. This Arabidopsis thaliana (Mouse-ear cress) protein is Wall-associated receptor kinase 3 (WAK3).